The sequence spans 453 residues: Protein amnionless (453 aa).

The N-terminal stretch at 1 to 19 is a signal peptide; it reads MGVLGRVLLWLQLCALTQA. At 20–357 the chain is on the extracellular side; that stretch reads VSKLWVPNTD…ESGAHVWGSS (338 aa). Asn35 is a glycosylation site (N-linked (GlcNAc...) asparagine). Intrachain disulfides connect Cys43-Cys96, Cys137-Cys213, Cys205-Cys211, Cys223-Cys249, Cys234-Cys250, and Cys239-Cys253. Residues 67–87 form an interaction with CUBN region; it reads SDMLLPLDGELVLASGAGFGV. The VWFC domain maps to 202 to 254; it reads PEDCADPSGCVCGNAEAQPWICAALLQPLGGRCPQAACHSALRPQGQCCDLCG. A helical membrane pass occupies residues 358–378; sequence AAGLAGGVAAAVLLALLVLLV. At 379–453 the chain is on the cytoplasmic side; that stretch reads APPLLRRAGR…PLFAGAEAEA (75 aa).

Interacts (via extracellular region) with CUBN/cubilin, giving rise to a huge complex containing one AMN chain and three CUBN chains. In terms of processing, N-glycosylated. A soluble form arises by proteolytic removal of the membrane anchor. In terms of tissue distribution, detected in proximal tubules in the kidney cortex (at protein level). Long isoforms are highly expressed in small intestine, colon and kidney (renal proximal tubule epithelial cells). Shorter isoforms are detected at lower levels in testis, thymus and peripheral blood leukocytes.

It is found in the apical cell membrane. The protein resides in the cell membrane. It localises to the endosome membrane. The protein localises to the membrane. Its subcellular location is the coated pit. It is found in the secreted. Its function is as follows. Membrane-bound component of the endocytic receptor formed by AMN and CUBN. Required for normal CUBN glycosylation and trafficking to the cell surface. The complex formed by AMN and CUBN is required for efficient absorption of vitamin B12. Required for normal CUBN-mediated protein transport in the kidney. This chain is Protein amnionless (AMN), found in Homo sapiens (Human).